Reading from the N-terminus, the 354-residue chain is Neutral protease 2 homolog MEP3 (354 aa).

The signal sequence occupies residues 1 to 19 (MHFTSSLLALVALTTQALA). A propeptide spanning residues 20-179 (FPLNDLPKRD…QSAIPKLEKR (160 aa)) is cleaved from the precursor. 2 cysteine pairs are disulfide-bonded: Cys-186/Cys-256 and Cys-263/Cys-281. Residue His-305 participates in Zn(2+) binding. The active site involves Glu-306. 2 residues coordinate Zn(2+): His-309 and Asp-320.

Belongs to the peptidase M35 family. Requires Zn(2+) as cofactor.

The protein localises to the secreted. It catalyses the reaction Preferential cleavage of bonds with hydrophobic residues in P1'. Also 3-Asn-|-Gln-4 and 8-Gly-|-Ser-9 bonds in insulin B chain.. Functionally, secreted metalloproteinase that allows assimilation of proteinaceous substrates. Shows high activities on basic nuclear substrates such as histone and protamine. May be involved in virulence. This is Neutral protease 2 homolog MEP3 (MEP3) from Coccidioides posadasii (strain C735) (Valley fever fungus).